The chain runs to 373 residues: MNGTISVLLAGGGTAGHVEPAMAVADALAALEPGVRITALGTERGLETRLVPERGYALELITPVPLPRKLSGDLARLPMRVRRAVRETREILDTVHADVVIGFGGYVALPAYLAARRNRVPIVVHEANASAGLANKVGARFARRVLSAVADPGLGRVEVVGTPVRSSITELDRAALRAEARAHFGFADDARVLLVFGGSQGARSLNNVVSGAAKALAAAGISVLHAYGAKNTLELPDPAPGGPPYVAVPYLSRMDLAYAAADLAICRSGAMTVAEVTAVGLPAVYVPLPIGNGEQRLNARPVVETGGGLVVDDADLSPQFVADTVVPLLTDTGRLQTMTAGAALSGHRDAARHVAHVALDVAREAAGGRKGVR.

Residues 14 to 16, N128, R165, S199, and Q295 each bind UDP-N-acetyl-alpha-D-glucosamine; that span reads TAG.

The protein belongs to the glycosyltransferase 28 family. MurG subfamily.

It is found in the cell membrane. It catalyses the reaction di-trans,octa-cis-undecaprenyl diphospho-N-acetyl-alpha-D-muramoyl-L-alanyl-D-glutamyl-meso-2,6-diaminopimeloyl-D-alanyl-D-alanine + UDP-N-acetyl-alpha-D-glucosamine = di-trans,octa-cis-undecaprenyl diphospho-[N-acetyl-alpha-D-glucosaminyl-(1-&gt;4)]-N-acetyl-alpha-D-muramoyl-L-alanyl-D-glutamyl-meso-2,6-diaminopimeloyl-D-alanyl-D-alanine + UDP + H(+). The protein operates within cell wall biogenesis; peptidoglycan biosynthesis. Its function is as follows. Cell wall formation. Catalyzes the transfer of a GlcNAc subunit on undecaprenyl-pyrophosphoryl-MurNAc-pentapeptide (lipid intermediate I) to form undecaprenyl-pyrophosphoryl-MurNAc-(pentapeptide)GlcNAc (lipid intermediate II). This is UDP-N-acetylglucosamine--N-acetylmuramyl-(pentapeptide) pyrophosphoryl-undecaprenol N-acetylglucosamine transferase from Mycobacterium sp. (strain JLS).